Consider the following 542-residue polypeptide: Putative serine/threonine-protein kinase L205 (542 aa).

Residues 20-30 (FEKKSVGHNSD) are compositionally biased toward basic and acidic residues. Positions 20–49 (FEKKSVGHNSDDEYDDTVPYNEDDETSEEE) are disordered. Acidic residues predominate over residues 31-49 (DEYDDTVPYNEDDETSEEE). The Protein kinase domain occupies 69–538 (YLLLKKIGSG…ADELLKHPWL (470 aa)). Residues 75 to 83 (IGSGNNASV) and Lys98 each bind ATP. Asp201 acts as the Proton acceptor in catalysis. The disordered stretch occupies residues 278 to 314 (EELIPDDPDNNEKYYDSTDSEEYDYSDNSDYYDDDED). Over residues 295-314 (TDSEEYDYSDNSDYYDDDED) the composition is skewed to acidic residues.

It belongs to the protein kinase superfamily. Ser/Thr protein kinase family.

It catalyses the reaction L-seryl-[protein] + ATP = O-phospho-L-seryl-[protein] + ADP + H(+). The catalysed reaction is L-threonyl-[protein] + ATP = O-phospho-L-threonyl-[protein] + ADP + H(+). The chain is Putative serine/threonine-protein kinase L205 from Acanthamoeba polyphaga (Amoeba).